Reading from the N-terminus, the 185-residue chain is Ribosome-recycling factor (185 aa).

It belongs to the RRF family.

It localises to the cytoplasm. In terms of biological role, responsible for the release of ribosomes from messenger RNA at the termination of protein biosynthesis. May increase the efficiency of translation by recycling ribosomes from one round of translation to another. This chain is Ribosome-recycling factor, found in Finegoldia magna (strain ATCC 29328 / DSM 20472 / WAL 2508) (Peptostreptococcus magnus).